The following is a 124-amino-acid chain: Glycine cleavage system H protein (124 aa).

The 83-residue stretch at 19–101 (VATVGITNHA…EGEGWLFKME (83 aa)) folds into the Lipoyl-binding domain. An N6-lipoyllysine modification is found at K60.

This sequence belongs to the GcvH family. As to quaternary structure, the glycine cleavage system is composed of four proteins: P, T, L and H. (R)-lipoate is required as a cofactor.

The glycine cleavage system catalyzes the degradation of glycine. The H protein shuttles the methylamine group of glycine from the P protein to the T protein. The protein is Glycine cleavage system H protein of Thermotoga maritima (strain ATCC 43589 / DSM 3109 / JCM 10099 / NBRC 100826 / MSB8).